A 10287-amino-acid chain; its full sequence is Putative E3 ubiquitin-protein ligase protein PFF1365c (10287 aa).

The TPR 1 repeat unit spans residues 47–82; the sequence is TRFFKSISNYGEFLLLQSSSRVISSYEHILRLLHQA. Low complexity predominate over residues 566-589; sequence TNKSRDNINQNTNTNNNNNNNNNN. The tract at residues 566–592 is disordered; that stretch reads TNKSRDNINQNTNTNNNNNNNNNNDGD. The TPR 2 repeat unit spans residues 631 to 665; it reads YPMFLKIQNKPQRCLKDISKPCEYYSNTLPIYGSY. Disordered stretches follow at residues 740 to 823, 1221 to 1251, and 1599 to 1670; these read KSSV…NKKK, NNSN…SSSS, and YVDD…DDNN. Low complexity-rich tracts occupy residues 767–810, 1221–1235, and 1242–1251; these read KANN…NNNN, NNSN…THNS, and SSSTYSSSSS. The span at 1601-1635 shows a compositional bias: acidic residues; sequence DDNEEDEGEEDKSEDYEYCDDEQQNDVYEDTEEES. A compositionally biased stretch (basic residues) spans 1641–1653; sequence RKERRVHQKKKNS. Low complexity predominate over residues 1654–1670; it reads KVSINKKTNNSLSDDNN. A run of 3 helical transmembrane segments spans residues 1821–1841, 1860–1880, and 1900–1920; these read ACTF…TLFV, LKMA…GLLT, and ECCI…TIMI. The segment covering 2070 to 2080 has biased composition (basic residues); sequence SRRGIPLKKKS. The disordered stretch occupies residues 2070–2112; that stretch reads SRRGIPLKKKSERNNSKEENVNNMDHNNNNNSNSNNNNFFHRG. Low complexity predominate over residues 2090 to 2107; the sequence is VNNMDHNNNNNSNSNNNN. The stretch at 2116–2145 is one ANK 1 repeat; it reads TNPRNNNITCDRKNMEFLKKLMKNDHDAVQ. A TPR 3 repeat occupies 2141 to 2175; it reads HDAVQCLGKAYSVFHKNFERAQIAFVAVFLHLTGY. Residues 2854–2865 show a composition bias toward polar residues; sequence NLSSNKRSQKGY. 9 disordered regions span residues 2854–2945, 3087–3113, 3303–3344, 3561–3599, 3942–3998, 4076–4157, 4695–4716, 4886–4972, and 4984–5051; these read NLSS…SKEP, KNRN…NNIN, NGHT…NDRG, FSKG…SSIN, TMEN…KDHI, LFNS…INYY, EKKN…KEEG, SPYF…LRNS, and YRNK…SNAD. The segment covering 2886-2929 has biased composition (basic and acidic residues); it reads SLDKYNDKEKKNDKINNGDTKNSDDGKIDMDDKKYYNDDLKNSD. Residues 3090-3113 are compositionally biased toward low complexity; the sequence is NSNNNNNNNNTNNSNNSNNNNNIN. Positions 3316-3335 are enriched in acidic residues; the sequence is YDDDNCDNYDNYDNDNENDN. Basic and acidic residues-rich tracts occupy residues 3567–3579 and 3965–3974; these read KKEM…EKIK and PSKDKSKHYN. Residues 3975 to 3992 show a composition bias toward low complexity; that stretch reads DNNNNNNDDNNSNNNNDY. The segment covering 4079–4094 has biased composition (basic and acidic residues); that stretch reads SKKDGSSNNDKNDNSN. 2 stretches are compositionally biased toward low complexity: residues 4095–4116 and 4124–4157; these read KNRN…NNNN and NINN…INYY. Positions 4906-4917 are enriched in polar residues; the sequence is YNIQNSDNSNIG. Low complexity-rich tracts occupy residues 4918–4942 and 4953–4972; these read DSEL…DSLN and NSSS…LRNS. Residues 5026–5045 are compositionally biased toward basic residues; that stretch reads KIKKNKSYKNKTHKNKKQKN. Transmembrane regions (helical) follow at residues 5058-5078, 5106-5126, 5552-5572, 5716-5736, and 5815-5835; these read LYGY…CIIL, FIKL…KYFA, EEIL…YYLG, LPIF…VVYI, and FLSY…NQII. A disordered region spans residues 5848 to 5917; the sequence is VNKNKGNDNV…NNNNVRNSNN (70 aa). The ANK 2 repeat unit spans residues 6004–6032; sequence GINSLYVNGTNGNLKTDKILLHNFSNFDL. The stretch at 6051 to 6084 is one TPR 4 repeat; it reads LVHYFACAAYYIKRADVYNIMNYYNEHTHANFKQ. 3 disordered regions span residues 6495 to 6527, 7123 to 7147, and 7183 to 7217; these read EEEK…HEKK, EKKK…DNNR, and NKNN…CSNS. The segment covering 6501-6527 has biased composition (basic and acidic residues); sequence ENEKEVEKDENVHDEKDKVEQIEHEKK. Residues 7129-7147 are compositionally biased toward polar residues; the sequence is GSNNIGSNTNIHELSDNNR. TPR repeat units lie at residues 7347–7380 and 7577–7610; these read SNDS…KPFI and NNNN…YDDI. The span at 7571–7583 shows a compositional bias: low complexity; that stretch reads DDGNNNNNNNDSM. Disordered regions lie at residues 7571 to 7590 and 7653 to 7712; these read DDGN…KDDM and SNER…VNNI. A compositionally biased stretch (basic and acidic residues) spans 7696–7706; the sequence is DNNKDKDDGNH. ANK repeat units lie at residues 7809–7839, 7845–7875, and 7880–7917; these read KYLT…NPNK, EKET…QVNK, and GNTA…DLTI. Disordered regions lie at residues 8208 to 8300 and 8413 to 8448; these read LKDD…SAKN and ALNS…NNYN. The span at 8219–8259 shows a compositional bias: basic and acidic residues; the sequence is YQKPYDKKVINKNKNDNYDKNDNYDKKDNYDTNDKNDKNNC. Polar residues predominate over residues 8277–8300; the sequence is VMNTNSSGRRTISKNSPNLSSAKN. A compositionally biased stretch (low complexity) spans 8415-8448; sequence NSNMSNNNNNNNNSNNNNNNNSNNNNNNYNNNYN. 2 TPR repeats span residues 8782–8815 and 9550–9584; these read QTCD…SNNI and DLPI…ITSS. Disordered regions lie at residues 9795–9818 and 9913–9979; these read MGSD…HKYD and NVLL…SKNT. 2 stretches are compositionally biased toward basic and acidic residues: residues 9800–9818 and 9913–9930; these read ILKD…HKYD and NVLL…DDIR. Residues 9931–9971 show a composition bias toward low complexity; it reads NNMNNNNNNNNNNNNNNNNNNNNNNNNNNNNNNNNNNNNLN. An HECT domain is found at 9938–10273; that stretch reads NNNNNNNNNN…IKNCTAIDLD (336 aa). Catalysis depends on Cys10241, which acts as the Glycyl thioester intermediate.

It is found in the membrane. It carries out the reaction S-ubiquitinyl-[E2 ubiquitin-conjugating enzyme]-L-cysteine + [acceptor protein]-L-lysine = [E2 ubiquitin-conjugating enzyme]-L-cysteine + N(6)-ubiquitinyl-[acceptor protein]-L-lysine.. Its pathway is protein modification; protein ubiquitination. Its function is as follows. Putative E3 ubiquitin-protein ligase. The chain is Putative E3 ubiquitin-protein ligase protein PFF1365c from Plasmodium falciparum (isolate 3D7).